The chain runs to 240 residues: Probable septum site-determining protein MinC (240 aa).

Belongs to the MinC family. In terms of assembly, interacts with MinD and FtsZ.

Functionally, cell division inhibitor that blocks the formation of polar Z ring septums. Rapidly oscillates between the poles of the cell to destabilize FtsZ filaments that have formed before they mature into polar Z rings. Prevents FtsZ polymerization. This is Probable septum site-determining protein MinC from Acinetobacter baumannii (strain AYE).